The chain runs to 353 residues: MSEQQYTLPDLLQNWPWNRHLSPYYEEAKRESSAWVESFKPFDQDGQRAFDAYLLASLTYSHGSREFVRLGCDLMNFYFVYDEYTDVSDSAVADRLANIVIDAMRNPENSSQSGDHLLGKMTKHFWTRALAMAPAGSPCFEHFITTSETYLRAVTQEAEDRANKRVRKVDDYLRLRRDTCGARPTLALIEFGLNLPNEVVRHPSLVALTEAAVDLIILVNDMHSYVRELSCGHENHNLITAIMLEHRLNRQDAFHWLGSHCSRVVDQFLSDLDELPSWGEPTDSGVRDYINGLGQWVRGNDDWSTESKRYYGEDGETIRQERLVTTRSGESNYIKFGQVGVQDSVRIQPIEAN.

Mg(2+) contacts are provided by Asp-82, Asn-220, Ser-224, and Glu-228. Positions 82-86 match the DDXXD motif motif; the sequence is DEYTD. Residues Arg-309 and Tyr-310 each contribute to the (2E,6E)-farnesyl diphosphate site.

The protein belongs to the terpene synthase family. Requires Mg(2+) as cofactor.

It carries out the reaction (2E,6E)-farnesyl diphosphate = gamma-muurolene + diphosphate. The enzyme catalyses (2E,6E)-farnesyl diphosphate = alpha-selinene + diphosphate. It catalyses the reaction (2E,6E)-farnesyl diphosphate = delta-cadinene + diphosphate. Its function is as follows. Terpene cyclase that catalyzes the cyclization of farnesyl diphosphate (FPP) to various sesquiterpenes, including beta-elemene, gamma-muurolene, alpha-selinene, beta-selinene, beta-cadinene, delta-cadinene and alpha-cadinol. In Cyclocybe aegerita (Black poplar mushroom), this protein is Sesquiterpene synthase Agr8.